The chain runs to 364 residues: Transcription factor TGA4 (364 aa).

Positions 39-79 (PGSIIIPTNEKPDSLSEDTSHGTEGTPHKFDQEASTSRHPD) are disordered. Over residues 48–79 (EKPDSLSEDTSHGTEGTPHKFDQEASTSRHPD) the composition is skewed to basic and acidic residues. One can recognise a bZIP domain in the interval 78-141 (PDKIQRRLAQ…NGVDTNALSF (64 aa)). Coiled-coil stretches lie at residues 79 to 127 (DKIQ…RQQG) and 257 to 277 (NLRQ…EKLQ). Positions 80 to 100 (KIQRRLAQNREAARKSRLRKK) are basic motif. The interval 106–120 (LETSRLKLIHLEQEL) is leucine-zipper. The DOG1 domain occupies 149–359 (IVAFEMEYGH…RALSSSWAAR (211 aa)). Residues cysteine 256 and cysteine 262 are joined by a disulfide bond.

Belongs to the bZIP family. In terms of assembly, binds DNA as a dimer. Interaction with the Dof domain proteins OBP1, OBP2 or OBP3 enhances the binding to the ocs element. Interacts with RAP2-3/EPB, an ethylene-responsive element binding protein. The reduced form interacts with NPR1. As to expression, predominantly expressed in roots.

The protein localises to the nucleus. Functionally, transcriptional activator that binds specifically to the DNA sequence 5'-TGACG-3'. Recognizes ocs elements like the as-1 motif of the cauliflower mosaic virus 35S promoter. Binding to the as-1-like cis elements mediate auxin- and salicylic acid-inducible transcription. May be involved in the induction of the systemic acquired resistance (SAR) via its interaction with NPR1. Could also bind to the Hex-motif (5'-TGACGTGG-3') another cis-acting element found in plant histone promoters. The sequence is that of Transcription factor TGA4 (TGA4) from Arabidopsis thaliana (Mouse-ear cress).